Consider the following 124-residue polypeptide: MIPLILAVSAGGVAGTLLRFATGNWINANWPRHFYTATLAVNIVGCLLIGVLYGLFLVRPEVPIEVRAGLIVGFLGGLTTFSSFSLDTVRLLESGQVALALGYAALSVFGGLLATWAGLSLTKL.

Helical transmembrane passes span 1–21, 38–58, 69–89, and 97–117; these read MIPL…LRFA, TLAV…LFLV, GLIV…LDTV, and VALA…ATWA. The Na(+) site is built by glycine 76 and threonine 79.

It belongs to the fluoride channel Fluc/FEX (TC 1.A.43) family.

The protein resides in the cell inner membrane. The enzyme catalyses fluoride(in) = fluoride(out). Na(+) is not transported, but it plays an essential structural role and its presence is essential for fluoride channel function. In terms of biological role, fluoride-specific ion channel. Important for reducing fluoride concentration in the cell, thus reducing its toxicity. The sequence is that of Fluoride-specific ion channel FluC from Pseudomonas fluorescens (strain ATCC BAA-477 / NRRL B-23932 / Pf-5).